We begin with the raw amino-acid sequence, 352 residues long: Protein SIS1 (352 aa).

Positions 4 to 70 (ETKLYDLLGV…REIYDQYGLE (67 aa)) constitute a J domain. Residue Ser275 is modified to Phosphoserine. The disordered stretch occupies residues 300–325 (VQPVQPSQTSTYPGQGMPTPKNPSQR). Over residues 301–312 (QPVQPSQTSTYP) the composition is skewed to polar residues.

Interacts with polyadenylate-binding protein PAB1.

Its subcellular location is the cytoplasm. It is found in the nucleus. In terms of biological role, required for nuclear migration during mitosis. It is required for the normal initiation of translation. Might mediate the dissociation of a specific protein complex of the translation machinery. Essential for viability. This is Protein SIS1 (SIS1) from Saccharomyces cerevisiae (strain ATCC 204508 / S288c) (Baker's yeast).